Reading from the N-terminus, the 172-residue chain is NADH-quinone oxidoreductase subunit B (172 aa).

[4Fe-4S] cluster-binding residues include C46, C47, C111, and C141.

The protein belongs to the complex I 20 kDa subunit family. NDH-1 is composed of 14 different subunits. Subunits NuoB, C, D, E, F, and G constitute the peripheral sector of the complex. [4Fe-4S] cluster is required as a cofactor.

The protein resides in the cell membrane. The catalysed reaction is a quinone + NADH + 5 H(+)(in) = a quinol + NAD(+) + 4 H(+)(out). Its function is as follows. NDH-1 shuttles electrons from NADH, via FMN and iron-sulfur (Fe-S) centers, to quinones in the respiratory chain. The immediate electron acceptor for the enzyme in this species is believed to be a menaquinone. Couples the redox reaction to proton translocation (for every two electrons transferred, four hydrogen ions are translocated across the cytoplasmic membrane), and thus conserves the redox energy in a proton gradient. The sequence is that of NADH-quinone oxidoreductase subunit B from Bacillus cytotoxicus (strain DSM 22905 / CIP 110041 / 391-98 / NVH 391-98).